We begin with the raw amino-acid sequence, 328 residues long: Alcohol-sensitive RING finger protein 1 (328 aa).

The segment at cysteine 18–arginine 61 adopts an RING-type 1; atypical zinc-finger fold. The RING-type 2; atypical zinc-finger motif lies at cysteine 129–tyrosine 177.

The protein localises to the cytoplasm. It localises to the nucleus. In terms of biological role, required for tolerance to alcohol. The protein is Alcohol-sensitive RING finger protein 1 (ASR1) of Eremothecium gossypii (strain ATCC 10895 / CBS 109.51 / FGSC 9923 / NRRL Y-1056) (Yeast).